Reading from the N-terminus, the 471-residue chain is tRNA modification GTPase MnmE (471 aa).

Positions 26, 83, and 136 each coordinate (6S)-5-formyl-5,6,7,8-tetrahydrofolate. The region spanning 232–393 (GLRVVLAGQP…LRRRLLQLAG (162 aa)) is the TrmE-type G domain. Asn242 is a K(+) binding site. GTP contacts are provided by residues 242–247 (NVGKSS), 261–267 (TPIAGTT), 286–289 (DTAG), 354–357 (NKAD), and 374–376 (SAR). Ser246 serves as a coordination point for Mg(2+). Residues Thr261, Ile263, and Thr266 each coordinate K(+). Mg(2+) is bound at residue Thr267. Lys471 contacts (6S)-5-formyl-5,6,7,8-tetrahydrofolate.

Belongs to the TRAFAC class TrmE-Era-EngA-EngB-Septin-like GTPase superfamily. TrmE GTPase family. Homodimer. Heterotetramer of two MnmE and two MnmG subunits. Requires K(+) as cofactor.

The protein resides in the cytoplasm. Exhibits a very high intrinsic GTPase hydrolysis rate. Involved in the addition of a carboxymethylaminomethyl (cmnm) group at the wobble position (U34) of certain tRNAs, forming tRNA-cmnm(5)s(2)U34. This chain is tRNA modification GTPase MnmE, found in Methylibium petroleiphilum (strain ATCC BAA-1232 / LMG 22953 / PM1).